A 570-amino-acid chain; its full sequence is Adenine deaminase (570 aa).

The protein belongs to the metallo-dependent hydrolases superfamily. Adenine deaminase family. Mn(2+) is required as a cofactor.

It carries out the reaction adenine + H2O + H(+) = hypoxanthine + NH4(+). In Clostridium acetobutylicum (strain ATCC 824 / DSM 792 / JCM 1419 / IAM 19013 / LMG 5710 / NBRC 13948 / NRRL B-527 / VKM B-1787 / 2291 / W), this protein is Adenine deaminase.